We begin with the raw amino-acid sequence, 113 residues long: Hydrogenase maturation factor HypA (113 aa).

H2 lines the Ni(2+) pocket. The Zn(2+) site is built by C73, C76, C89, and C92.

The protein belongs to the HypA/HybF family.

In terms of biological role, involved in the maturation of [NiFe] hydrogenases. Required for nickel insertion into the metal center of the hydrogenase. The sequence is that of Hydrogenase maturation factor HypA from Picosynechococcus sp. (strain ATCC 27264 / PCC 7002 / PR-6) (Agmenellum quadruplicatum).